The sequence spans 165 residues: MDLSQLTPRRPYLLRAFYEWLLDNQLTPLLVVDVTLPGVQVPMEYARDGQIVLNIAPRAVGNLELANDEVRFNARFGGIPRQVSVPLAAVLAIYARENGAGTMFEPEAAYDEDTSIMNDEEASADNETVMSVIDGDKPDHDDDTHPDDEPPQPPRGGRPALRVVK.

Residues 119-165 (DEEASADNETVMSVIDGDKPDHDDDTHPDDEPPQPPRGGRPALRVVK) are disordered. The segment covering 134 to 143 (DGDKPDHDDD) has biased composition (basic and acidic residues).

The protein belongs to the SspB family. As to quaternary structure, homodimer.

Enhances recognition of ssrA-tagged proteins by the ClpX-ClpP protease; the ssrA degradation tag (AANDENYALAA) is added trans-translationally to proteins that are stalled on the ribosome, freeing the ribosome and targeting stalled peptides for degradation. SspB activates the ATPase activity of ClpX. Seems to act in concert with SspA in the regulation of several proteins during exponential and stationary-phase growth. Its function is as follows. Also stimulates degradation of the N-terminus of RseA (residues 1-108, alone or in complex with sigma-E) by ClpX-ClpP in a non-ssrA-mediated fashion. This is Stringent starvation protein B (sspB) from Shigella flexneri.